Here is a 466-residue protein sequence, read N- to C-terminus: Anthocyanidin 3-O-glucosyltransferase 1 (466 aa).

The active-site Proton acceptor is His22. An anthocyanidin contacts are provided by His22 and Gln87. Residue Asp122 is the Charge relay of the active site. A UDP-alpha-D-glucose-binding site is contributed by Thr145. His154 is an an anthocyanidin binding site. 7 residues coordinate UDP-alpha-D-glucose: Ala346, Gln348, His363, Trp366, Asn367, Ser368, and Glu371. Gly386 serves as a coordination point for an anthocyanidin. 2 residues coordinate UDP-alpha-D-glucose: Asp387 and Gln388.

It belongs to the UDP-glycosyltransferase family. In terms of tissue distribution, highest expression detected in receptacles and achenes, with very low levels detected in runners, leaves, flowers, crowns and green receptacles.

The enzyme catalyses an anthocyanidin + UDP-alpha-D-glucose + H(+) = an anthocyanidin 3-O-beta-D-glucoside + UDP. It carries out the reaction cyanidin + UDP-alpha-D-glucose = cyanidin 3-O-beta-D-glucoside + UDP + H(+). The catalysed reaction is pelargonidin + UDP-alpha-D-glucose = pelargonidin 3-O-beta-D-glucoside + UDP. It catalyses the reaction peonidin + UDP-alpha-D-glucose = peonidin 3-O-beta-D-glucoside + UDP. The enzyme catalyses delphinidin + UDP-alpha-D-glucose = delphinidin 3-O-beta-D-glucoside + UDP. It carries out the reaction a flavonol + UDP-alpha-D-glucose = a flavonol 3-O-beta-D-glucoside + UDP + H(+). It functions in the pathway pigment biosynthesis; anthocyanin biosynthesis. In terms of biological role, in the presence of other necessary color factors, this glycosylation reaction allows the accumulation of anthocyanin pigments. Uses UDP-Glc as a sugar donor, but not UDP-Gal or UDP-GlcUA. Anthocyanidins are the preferred substrates in vivo, but flavonols can also be glucosylated in vitro. The chain is Anthocyanidin 3-O-glucosyltransferase 1 from Fragaria ananassa (Strawberry).